The primary structure comprises 396 residues: Tryptophan synthase beta chain (396 aa).

Residue Lys-86 is modified to N6-(pyridoxal phosphate)lysine.

Belongs to the TrpB family. As to quaternary structure, tetramer of two alpha and two beta chains. Pyridoxal 5'-phosphate is required as a cofactor.

The catalysed reaction is (1S,2R)-1-C-(indol-3-yl)glycerol 3-phosphate + L-serine = D-glyceraldehyde 3-phosphate + L-tryptophan + H2O. It functions in the pathway amino-acid biosynthesis; L-tryptophan biosynthesis; L-tryptophan from chorismate: step 5/5. Functionally, the beta subunit is responsible for the synthesis of L-tryptophan from indole and L-serine. The polypeptide is Tryptophan synthase beta chain (Yersinia pseudotuberculosis serotype O:1b (strain IP 31758)).